A 272-amino-acid polypeptide reads, in one-letter code: Undecaprenyl-diphosphatase (272 aa).

Helical transmembrane passes span 6–26 (SLLV…LPVS), 45–65 (AKTF…VMFW), 89–109 (LSLI…LVFH), 115–135 (LFNP…LIIA), 156–176 (AFFI…RSGA), 189–209 (YAAS…ATAL), 221–241 (ADLP…LVAI), and 251–271 (ISFI…FAVF).

The protein belongs to the UppP family.

The protein localises to the cell inner membrane. The catalysed reaction is di-trans,octa-cis-undecaprenyl diphosphate + H2O = di-trans,octa-cis-undecaprenyl phosphate + phosphate + H(+). Catalyzes the dephosphorylation of undecaprenyl diphosphate (UPP). Confers resistance to bacitracin. This Cronobacter sakazakii (strain ATCC BAA-894) (Enterobacter sakazakii) protein is Undecaprenyl-diphosphatase.